A 47-amino-acid polypeptide reads, in one-letter code: MAKGKRTFQPNNRRRARVHGFRLRMRTRAGRAIVANRRSKGRRALTA.

It belongs to the bacterial ribosomal protein bL34 family.

The protein is Large ribosomal subunit protein bL34 (rpmH) of Mycolicibacterium smegmatis (strain ATCC 700084 / mc(2)155) (Mycobacterium smegmatis).